A 123-amino-acid chain; its full sequence is Ribosome-binding factor A (123 aa).

It belongs to the RbfA family. As to quaternary structure, monomer. Binds 30S ribosomal subunits, but not 50S ribosomal subunits or 70S ribosomes.

It is found in the cytoplasm. Functionally, one of several proteins that assist in the late maturation steps of the functional core of the 30S ribosomal subunit. Associates with free 30S ribosomal subunits (but not with 30S subunits that are part of 70S ribosomes or polysomes). Required for efficient processing of 16S rRNA. May interact with the 5'-terminal helix region of 16S rRNA. This is Ribosome-binding factor A from Delftia acidovorans (strain DSM 14801 / SPH-1).